The chain runs to 997 residues: Protein translocase subunit SecA (997 aa).

ATP is bound by residues Q84, 102–106 (GEGKT), and D582. The segment at 950–997 (PYVPVPEAKPEPSEVFGVERKRATPPPQPGLSRAERRRLMRQEKKRKK) is disordered. Residues 957 to 971 (AKPEPSEVFGVERKR) show a composition bias toward basic and acidic residues. The span at 984-997 (ERRRLMRQEKKRKK) shows a compositional bias: basic residues.

The protein belongs to the SecA family. In terms of assembly, monomer and homodimer. Part of the essential Sec protein translocation apparatus which comprises SecA, SecYEG and auxiliary proteins SecDF. Other proteins may also be involved.

The protein resides in the cell inner membrane. It localises to the cytoplasm. It catalyses the reaction ATP + H2O + cellular proteinSide 1 = ADP + phosphate + cellular proteinSide 2.. Functionally, part of the Sec protein translocase complex. Interacts with the SecYEG preprotein conducting channel. Has a central role in coupling the hydrolysis of ATP to the transfer of proteins into and across the cell membrane, serving as an ATP-driven molecular motor driving the stepwise translocation of polypeptide chains across the membrane. The polypeptide is Protein translocase subunit SecA (Thermus thermophilus (strain ATCC BAA-163 / DSM 7039 / HB27)).